Consider the following 847-residue polypeptide: E4 SUMO-protein ligase PIAL1 (847 aa).

Residues 113 to 271 (VNSPVTLISQ…EVVGSNSDCD (159 aa)) form an interacting domain (IND), required for interaction with MOM1 and PIAL2 region. The segment at 268–349 (SDCDIIEGPS…LRKILEEVGR (82 aa)) adopts an SP-RING-type zinc-finger fold. Residues Cys-299, His-301, Cys-322, and Cys-325 each coordinate Zn(2+). 7 consecutive repeat copies span residues 569–591 (QRPVPSYIAHPQTFHVNYGENAD), 592–614 (QRWMPSSIAHPQTLPVNYGGNTN), 615–637 (QRPIPSSIAHPQTLPVNYRGNTD), 638–659 (HRSTPYSITHLQTLLNYGGNAD), 660–682 (QRPMPSSITNLQTLPATYGGYAH), 683–705 (QRPMSSSITHPRTSPVNYGGTPD), and 706–728 (QRPMPSSITHPQTLPVSYGGTTD). Positions 569-728 (QRPVPSYIAH…LPVSYGGTTD (160 aa)) are 7 X 23 AA approximate tandem repeats.

The protein belongs to the PIAL protein ligase family. As to quaternary structure, homodimer. Interacts with MOM1 and PIAL2 to form a high molecular mass complex which mediates transcriptional gene silencing at heterochromatin regions. In terms of tissue distribution, expressed in leaves, stems and flowers, and, at low levels, in siliques and old leaves.

It localises to the nucleus. It functions in the pathway protein modification; protein sumoylation. In terms of biological role, together with MOM1 and PIAL2, regulates transcriptional gene silencing (TGS) independently of changes in DNA methylation. E4-type SUMO ligase that promotes SUMO chain formation in a SCE1-dependent manner and thus contributes to a pathway for proteolytic removal of sumoylation substrates. Involved in stress responses (e.g. osmotic, salt and abscisic acid ABA) and sulfur metabolism. The chain is E4 SUMO-protein ligase PIAL1 from Arabidopsis thaliana (Mouse-ear cress).